Here is a 106-residue protein sequence, read N- to C-terminus: Nucleoid-associated protein XC_3243 (106 aa).

The segment at Asp-82 to Phe-106 is disordered.

Belongs to the YbaB/EbfC family. Homodimer.

Its subcellular location is the cytoplasm. It localises to the nucleoid. In terms of biological role, binds to DNA and alters its conformation. May be involved in regulation of gene expression, nucleoid organization and DNA protection. The sequence is that of Nucleoid-associated protein XC_3243 from Xanthomonas campestris pv. campestris (strain 8004).